Consider the following 588-residue polypeptide: Lysophospholipase 2 (588 aa).

Positions 15-38 (NRALPNAPDGYTPQGETCPSKRPS) are disordered. The 544-residue stretch at 31-574 (TCPSKRPSIR…KTYCWNGTIN (544 aa)) folds into the PLA2c domain. Asn-41, Asn-58, Asn-77, Asn-84, Asn-88, Asn-119, Asn-123, Asn-157, Asn-167, Asn-228, Asn-272, Asn-302, Asn-340, Asn-431, Asn-449, Asn-478, Asn-481, Asn-501, Asn-510, Asn-529, Asn-553, Asn-570, and Asn-574 each carry an N-linked (GlcNAc...) asparagine glycan.

This sequence belongs to the lysophospholipase family.

The enzyme catalyses a 1-acyl-sn-glycero-3-phosphocholine + H2O = sn-glycerol 3-phosphocholine + a fatty acid + H(+). In terms of biological role, catalyzes the release of fatty acids from lysophospholipids. This is Lysophospholipase 2 (plb2) from Aspergillus fumigatus (strain ATCC MYA-4609 / CBS 101355 / FGSC A1100 / Af293) (Neosartorya fumigata).